The chain runs to 185 residues: UPF0215 protein APE_0476.1 (185 aa).

This sequence belongs to the UPF0215 family.

This is UPF0215 protein APE_0476.1 from Aeropyrum pernix (strain ATCC 700893 / DSM 11879 / JCM 9820 / NBRC 100138 / K1).